A 428-amino-acid polypeptide reads, in one-letter code: Something about silencing protein 10 (428 aa).

The disordered stretch occupies residues 1–93 (MDSDGDDYVM…NTMDWGSKRS (93 aa)). Composition is skewed to acidic residues over residues 15–24 (QEYDDEEREI) and 46–62 (SDDD…EQQD). A phosphoserine mark is found at serine 152, serine 323, serine 324, and serine 337. Residues 317–386 (GQQASVSSDD…LRNPRVKHRG (70 aa)) form a disordered region. Over residues 324–336 (SDDDDNDDDDDAE) the composition is skewed to acidic residues. Residues 344–353 (EEAGEEEEEE) are compositionally biased toward acidic residues. The segment covering 370-386 (TPHRKKELRNPRVKHRG) has biased composition (basic residues).

The protein belongs to the SAS10 family.

The protein localises to the nucleus. In terms of biological role, essential for gene silencing: has a role in the structure of silenced chromatin. May be involved in gene regulation during development. Binds RNA. The chain is Something about silencing protein 10 from Drosophila melanogaster (Fruit fly).